Here is a 138-residue protein sequence, read N- to C-terminus: Chorion protein S16 (138 aa).

Residues 1–20 (MSATLRLLCLMACCVALAVA) form the signal peptide.

The protein belongs to the chorion protein S16 family.

Its subcellular location is the secreted. In terms of biological role, chorion membrane (egg shell) protein; plays a role in protecting the egg from the environment. The polypeptide is Chorion protein S16 (Cp16) (Drosophila melanogaster (Fruit fly)).